The sequence spans 337 residues: Autophagy protein 5 (337 aa).

Lys-128 participates in a covalent cross-link: Glycyl lysine isopeptide (Lys-Gly) (interchain with G-Cter in ATG12). Positions 271 to 290 (RAQTSGEERSIDDTEEADGS) are disordered. The span at 276 to 290 (GEERSIDDTEEADGS) shows a compositional bias: basic and acidic residues.

It belongs to the ATG5 family. In terms of assembly, conjugated to ATG12. Post-translationally, conjugated to ATG12; which is essential for autophagy. Conjugation with ATG12 involves ATG7 as an E1-like activating enzyme and ATG10 as an E2-like conjugating enzyme. Ubiquitous.

It is found in the cytoplasm. In terms of biological role, required for autophagy. Conjugation to ATG12 is essential for plant nutrient recycling. Involved in a negative feedback loop that modulates NPR1-dependent salicylic acid (SA) signaling and limits senescence and immunity-related programmed cell death (PCD) in plants. Involved in complete proteolysis of chloroplast stroma proteins in senescent leaves. Involved in the degradation of damaged peroxisomes. This is Autophagy protein 5 from Arabidopsis thaliana (Mouse-ear cress).